The sequence spans 468 residues: tRNA modification GTPase MnmE (468 aa).

Arginine 29, glutamate 97, and lysine 136 together coordinate (6S)-5-formyl-5,6,7,8-tetrahydrofolate. The 159-residue stretch at 232-390 (GFELAIVGRP…VVAHIVARME (159 aa)) folds into the TrmE-type G domain. Asparagine 242 lines the K(+) pocket. GTP contacts are provided by residues 242 to 247 (NVGKSS), 261 to 267 (TDLAGTT), and 286 to 289 (DTAG). Serine 246 provides a ligand contact to Mg(2+). K(+) contacts are provided by threonine 261, leucine 263, and threonine 266. Mg(2+) is bound at residue threonine 267. Residue lysine 468 coordinates (6S)-5-formyl-5,6,7,8-tetrahydrofolate.

This sequence belongs to the TRAFAC class TrmE-Era-EngA-EngB-Septin-like GTPase superfamily. TrmE GTPase family. In terms of assembly, homodimer. Heterotetramer of two MnmE and two MnmG subunits. K(+) serves as cofactor.

The protein localises to the cytoplasm. Functionally, exhibits a very high intrinsic GTPase hydrolysis rate. Involved in the addition of a carboxymethylaminomethyl (cmnm) group at the wobble position (U34) of certain tRNAs, forming tRNA-cmnm(5)s(2)U34. This is tRNA modification GTPase MnmE from Magnetococcus marinus (strain ATCC BAA-1437 / JCM 17883 / MC-1).